The following is a 169-amino-acid chain: S-ribosylhomocysteine lyase (169 aa).

Positions 54, 58, and 129 each coordinate Fe cation.

This sequence belongs to the LuxS family. As to quaternary structure, homodimer. Fe cation serves as cofactor.

It carries out the reaction S-(5-deoxy-D-ribos-5-yl)-L-homocysteine = (S)-4,5-dihydroxypentane-2,3-dione + L-homocysteine. Functionally, involved in the synthesis of autoinducer 2 (AI-2) which is secreted by bacteria and is used to communicate both the cell density and the metabolic potential of the environment. The regulation of gene expression in response to changes in cell density is called quorum sensing. Catalyzes the transformation of S-ribosylhomocysteine (RHC) to homocysteine (HC) and 4,5-dihydroxy-2,3-pentadione (DPD). This is S-ribosylhomocysteine lyase from Glaesserella parasuis serovar 5 (strain SH0165) (Haemophilus parasuis).